The following is a 230-amino-acid chain: Probable GTP-binding protein EngB (230 aa).

The EngB-type G domain occupies 36–224 (ERPKVIVMGR…KHRINKRINI (189 aa)). Residues 44 to 51 (GRSNVGKS), 69 to 73 (GVTLK), 86 to 89 (DLPG), 166 to 169 (NKMD), and 201 to 203 (VPA) contribute to the GTP site. 2 residues coordinate Mg(2+): Ser51 and Thr71.

The protein belongs to the TRAFAC class TrmE-Era-EngA-EngB-Septin-like GTPase superfamily. EngB GTPase family. Mg(2+) is required as a cofactor.

Necessary for normal cell division and for the maintenance of normal septation. The polypeptide is Probable GTP-binding protein EngB (Methanococcus maripaludis (strain DSM 14266 / JCM 13030 / NBRC 101832 / S2 / LL)).